The primary structure comprises 212 residues: Endoplasmic reticulum vesicle protein 25 (212 aa).

Residues 1-21 (MKSFAACVLLLCALFFEQVFA) form the signal peptide. Topologically, residues 22 to 181 (VRFDIPASTK…TNESTNRRVR (160 aa)) are lumenal. A GOLD domain is found at 34 to 122 (QVCIRDFVSE…SRSIELDIES (89 aa)). Residues 182–202 (NFSIAVIVVLVALGAWQVNYM) form a helical membrane-spanning segment. The Cytoplasmic segment spans residues 203-212 (KNFFRAKHII).

This sequence belongs to the EMP24/GP25L family.

The protein localises to the endoplasmic reticulum membrane. It is found in the golgi apparatus membrane. Functionally, constituent of COPII-coated endoplasmic reticulum-derived transport vesicles. Required for efficient transport of a subset of secretory proteins to the Golgi. Facilitates retrograde transport from the Golgi to the endoplasmic reticulum. This is Endoplasmic reticulum vesicle protein 25 (ERV25) from Kluyveromyces lactis (strain ATCC 8585 / CBS 2359 / DSM 70799 / NBRC 1267 / NRRL Y-1140 / WM37) (Yeast).